The sequence spans 270 residues: Formamidopyrimidine-DNA glycosylase (270 aa).

Catalysis depends on P2, which acts as the Schiff-base intermediate with DNA. Residue E3 is the Proton donor of the active site. K58 acts as the Proton donor; for beta-elimination activity in catalysis. Residues H91, R110, and K151 each coordinate DNA. The FPG-type zinc-finger motif lies at 236–270; the sequence is LVYGKAGAPCTECNTPLKEIRMNNRSTVYCPRCQR. The active-site Proton donor; for delta-elimination activity is the R260.

This sequence belongs to the FPG family. Monomer. The cofactor is Zn(2+).

It carries out the reaction Hydrolysis of DNA containing ring-opened 7-methylguanine residues, releasing 2,6-diamino-4-hydroxy-5-(N-methyl)formamidopyrimidine.. The enzyme catalyses 2'-deoxyribonucleotide-(2'-deoxyribose 5'-phosphate)-2'-deoxyribonucleotide-DNA = a 3'-end 2'-deoxyribonucleotide-(2,3-dehydro-2,3-deoxyribose 5'-phosphate)-DNA + a 5'-end 5'-phospho-2'-deoxyribonucleoside-DNA + H(+). Involved in base excision repair of DNA damaged by oxidation or by mutagenic agents. Acts as a DNA glycosylase that recognizes and removes damaged bases. Has a preference for oxidized purines, such as 7,8-dihydro-8-oxoguanine (8-oxoG). Has AP (apurinic/apyrimidinic) lyase activity and introduces nicks in the DNA strand. Cleaves the DNA backbone by beta-delta elimination to generate a single-strand break at the site of the removed base with both 3'- and 5'-phosphates. The sequence is that of Formamidopyrimidine-DNA glycosylase from Marinobacter nauticus (strain ATCC 700491 / DSM 11845 / VT8) (Marinobacter aquaeolei).